The following is a 401-amino-acid chain: S-adenosylmethionine synthase (401 aa).

ATP is bound at residue 135–140 (GHGSGD).

It belongs to the AdoMet synthase 2 family. The cofactor is Mg(2+).

The catalysed reaction is L-methionine + ATP + H2O = S-adenosyl-L-methionine + phosphate + diphosphate. It participates in amino-acid biosynthesis; S-adenosyl-L-methionine biosynthesis; S-adenosyl-L-methionine from L-methionine: step 1/1. Its function is as follows. Catalyzes the formation of S-adenosylmethionine from methionine and ATP. The sequence is that of S-adenosylmethionine synthase (mat) from Methanothermobacter marburgensis (strain ATCC BAA-927 / DSM 2133 / JCM 14651 / NBRC 100331 / OCM 82 / Marburg) (Methanobacterium thermoautotrophicum).